The following is a 149-amino-acid chain: uncharacterized protein (149 aa).

It to Rhizobium NGR234A y4oM.

This is an uncharacterized protein from Sinorhizobium fredii (strain NBRC 101917 / NGR234).